Reading from the N-terminus, the 417-residue chain is Transcobalamin-1 (417 aa).

Residues 1 to 25 (MRQSHQLPLVGLLLFSLIPSQLCQS) form the signal peptide. Positions 24–308 (QSCVVSEKDY…DVTKLLLVPK (285 aa)) are globular N-terminal alpha domain. N-linked (GlcNAc...) asparagine glycosylation is present at N90. Residue 143 to 147 (TNYYQ) coordinates cyanocob(III)alamin. The cysteines at positions 156 and 198 are disulfide-linked. N161, N166, and N179 each carry an N-linked (GlcNAc...) asparagine glycan. The cyanocob(III)alamin site is built by D187 and Q287. A flexible linker region spans residues 309-327 (VQVNITDEPVPVVPTLSPE). Residues N312, N328, N345, and N360 are each glycosylated (N-linked (GlcNAc...) asparagine). The tract at residues 328–417 (NISVIYCVKI…GIMLSKMESI (90 aa)) is globular C-terminal beta domain. Residues 376 to 377 (YI) and 393 to 395 (WEH) contribute to the cyanocob(III)alamin site.

The protein belongs to the eukaryotic cobalamin transport proteins family. Post-translationally, contains about 30% carbohydrates. In terms of tissue distribution, haptocorrins are a family of cobalamin-binding glycoproteins found in blood, salivary and mucosal secretions.

Its subcellular location is the secreted. Binds vitamin B12 with femtomolar affinity and protects it from the acidic environment of the stomach. Binds to cobalamin and to cobalamin analogs such as cobinamide. The chain is Transcobalamin-1 (TCN1) from Sus scrofa (Pig).